A 225-amino-acid polypeptide reads, in one-letter code: Jeltraxin (225 aa).

The signal sequence occupies residues 1-19 (MKGLVIFFCLFYGCHVAGA). A Pentraxin (PTX) domain is found at 21-223 (GKTIMLFPQK…IVVLRNQFIP (203 aa)). An intrachain disulfide couples C51 to C112. Ca(2+) is bound by residues D75 and N76. An N-linked (GlcNAc...) asparagine glycan is attached at N87. The Ca(2+) site is built by E153, Q154, D155, and Q165. N207 is a glycosylation site (N-linked (GlcNAc...) asparagine).

As to quaternary structure, homodecamer consisting of two homopentamer units. Pentraxin (or pentaxin) have a discoid arrangement of 5 non-covalently bound subunits. Ca(2+) is required as a cofactor. In terms of processing, glycosylated. In terms of tissue distribution, oviduct. Highest expression levels were detected in the pars convoluta with lower levels detected in the pars recta. No expression was detected in the pars uterina.

It localises to the secreted. In terms of biological role, calcium-dependent beta-galactose specific lectin. The sequence is that of Jeltraxin from Lepidobatrachus laevis (Budgett's frog).